The following is a 384-amino-acid chain: L-aspartate decarboxylase (384 aa).

Lys-231 is subject to N6-(pyridoxal phosphate)lysine.

It belongs to the group II decarboxylase family. MfnA subfamily. In terms of assembly, homodimer. Can also form homohexamers. Requires pyridoxal 5'-phosphate as cofactor.

It catalyses the reaction L-aspartate + H(+) = beta-alanine + CO2. It participates in cofactor biosynthesis; coenzyme A biosynthesis. With respect to regulation, inhibited by hydroxylamine. In terms of biological role, catalyzes the decarboxylation of L-aspartate to produce beta-alanine. In vitro, can also catalyze the decarboxylation of L-glutamate to produce 4-aminobutanoate, but this activity does not seem necessary in vivo. Shows much higher activity with L-aspartate than with L-glutamate. Does not decarboxylate L-tyrosine. This Thermococcus kodakarensis (strain ATCC BAA-918 / JCM 12380 / KOD1) (Pyrococcus kodakaraensis (strain KOD1)) protein is L-aspartate decarboxylase.